Reading from the N-terminus, the 559-residue chain is MAQLPRLSRLGAPSLWDPASPAPTSGPRPRLWEGQDVLARWTDGLLYLGTIKKVDSAREVCLVQFEDDSQFLVLWKDISPAALPGEELLCCVCRSETVVPGNRLVSCEKCRHAYHQDCHVPRAPAPGEGEGASWVCRQCVFAIATKRGGALKKGPYARAMLGMKLSLPYGLKGLDWDAGHLSNRQQSYCYCGGPGEWNLKMLQCRSCLQWFHEACTQCLSKPLLYGDRFYEFECCVCRGGPEKVRRLQLRWVDVAHLVLYHLSVCCKKKYFDFDREILPFTSENWDSLLLGELSDTPKGERSSQLLSALNSHKDRFISGREIKKRKCLFGLHARTPPPVELLTGDGAPTSFPSGQGPGGGVSRPLGKRWRSEPEPLRRRQKGKVEELGPPTAAHSRHGSREQRALQASVSPPPPSPNQSYEGSSGYNFRPTDARCLPSSPIRMFASFHPSASTAGTSGDSEPPDRSPLGLHIGFPTDTPKSSPHSVTASSSSVPALTPGFSRHSPPSPLCRSLSPGTGGGVRGGVSYLSRGDPVRVLARRVRPDGSVQYLVEWGGGGIF.

The Tudor domain maps to 29–86 (PRLWEGQDVLARWTDGLLYLGTIKKVDSAREVCLVQFEDDSQFLVLWKDISPAALPGE). PHD-type zinc fingers lie at residues 87–142 (ELLC…CVFA) and 186–240 (QSYC…CRGG). Disordered stretches follow at residues 338 to 434 (PVEL…TDAR) and 448 to 526 (HPSA…GGVS). The segment covering 369–386 (WRSEPEPLRRRQKGKVEE) has biased composition (basic and acidic residues). Polar residues-rich tracts occupy residues 417 to 426 (NQSYEGSSGY) and 449 to 459 (PSASTAGTSGD). The segment covering 481–515 (SSPHSVTASSSSVPALTPGFSRHSPPSPLCRSLSP) has biased composition (low complexity).

Belongs to the Polycomblike family. In terms of assembly, associated component of the PRC2 complex. Interacts with p53/TP53. Interacts with CHMP1. As to expression, testis-specific.

It localises to the nucleus. It is found in the cytoplasm. The protein localises to the cytoskeleton. Its subcellular location is the microtubule organizing center. The protein resides in the centrosome. Functionally, polycomb group (PcG) that specifically binds histone H3 trimethylated at 'Lys-36' (H3K36me3) and recruits the PRC2 complex. Involved in DNA damage response and is recruited at double-strand breaks (DSBs). Acts by binding to H3K36me3, a mark for transcriptional activation, and recruiting the PRC2 complex: it is however unclear whether recruitment of the PRC2 complex to H3K36me3 leads to enhance or inhibit H3K27me3 methylation mediated by the PRC2 complex. According to some reports, PRC2 recruitment by PHF1 promotes H3K27me3 and subsequent gene silencing by inducing spreading of PRC2 and H3K27me3 into H3K36me3 loci. According to other reports, PHF1 recruits the PRC2 complex at double-strand breaks (DSBs) and inhibits the activity of PRC2. Regulates p53/TP53 stability and prolonges its turnover: may act by specifically binding to a methylated from of p53/TP53. In Mus musculus (Mouse), this protein is PHD finger protein 1 (Phf1).